Consider the following 430-residue polypeptide: Mucorpepsin (430 aa).

Positions 1 to 22 are cleaved as a signal peptide; that stretch reads MLFSQITSAILLTAASLSLTTA. Positions 23 to 69 are cleaved as a propeptide — activation peptide; that stretch reads RPVSKQSESKDKLLALPLTSVSRKFSQTKFGQQQLAEKLAGLKPFSE. The 333-residue stretch at 89–421 folds into the Peptidase A1 domain; that stretch reads YAIPVSIGTP…DFGNNRIGFA (333 aa). Asp-107 is a catalytic residue. Residues Cys-120 and Cys-126 are joined by a disulfide bond. Asn-148 and Asn-257 each carry an N-linked (GlcNAc...) asparagine glycan. Asp-306 is an active-site residue. Cys-341 and Cys-385 are disulfide-bonded.

Belongs to the peptidase A1 family.

The catalysed reaction is Hydrolysis of proteins, favoring hydrophobic residues at P1 and P1'. Clots milk. Does not accept Lys at P1, and hence does not activate trypsinogen.. This enzyme, capable of clotting milk is frequently used for cheese production. The polypeptide is Mucorpepsin (Rhizomucor miehei).